Consider the following 125-residue polypeptide: Phosphoribosyl-AMP cyclohydrolase (125 aa).

Residue Asp-91 coordinates Mg(2+). Position 92 (Cys-92) interacts with Zn(2+). The Mg(2+) site is built by Asp-93 and Asp-95. Residues Cys-108 and Cys-115 each coordinate Zn(2+).

This sequence belongs to the PRA-CH family. In terms of assembly, homodimer. It depends on Mg(2+) as a cofactor. Requires Zn(2+) as cofactor.

It localises to the cytoplasm. It catalyses the reaction 1-(5-phospho-beta-D-ribosyl)-5'-AMP + H2O = 1-(5-phospho-beta-D-ribosyl)-5-[(5-phospho-beta-D-ribosylamino)methylideneamino]imidazole-4-carboxamide. Its pathway is amino-acid biosynthesis; L-histidine biosynthesis; L-histidine from 5-phospho-alpha-D-ribose 1-diphosphate: step 3/9. Its function is as follows. Catalyzes the hydrolysis of the adenine ring of phosphoribosyl-AMP. In Streptomyces griseus subsp. griseus (strain JCM 4626 / CBS 651.72 / NBRC 13350 / KCC S-0626 / ISP 5235), this protein is Phosphoribosyl-AMP cyclohydrolase.